The following is a 158-amino-acid chain: MRSIAGLDKLKMEIFNVEELINMKPFKNMNKITINQKDNCILANRCFVKIDTPRYIPSTSISSSNIIRIRNHDFTLSELLYSPFHFQQPQFQYLLPGFVLTCIDKVSKQQKECKYCISNRGDDDSLSINIFIPTINKSIYIIIGLRMKNFWKPKFEIE.

This sequence belongs to the orthopoxvirus OPG058 family.

The polypeptide is Protein OPG060 (OPG060) (Cynomys gunnisoni (Gunnison's prairie dog)).